Here is a 556-residue protein sequence, read N- to C-terminus: Potassium-transporting ATPase potassium-binding subunit (556 aa).

Helical transmembrane passes span 6–26 (AGIA…VPLG), 65–85 (SVLA…LVQG), 133–153 (GLAV…IALV), 176–196 (LRIL…GGAI), 249–269 (PTPW…FSLP), 283–303 (VAIA…TMLL), 378–398 (GLYG…LMVG), 415–435 (LAAS…AIAM), 483–503 (ALGL…LALA), and 526–546 (FVGM…LPIL).

It belongs to the KdpA family. In terms of assembly, the system is composed of three essential subunits: KdpA, KdpB and KdpC.

Its subcellular location is the cell membrane. Functionally, part of the high-affinity ATP-driven potassium transport (or Kdp) system, which catalyzes the hydrolysis of ATP coupled with the electrogenic transport of potassium into the cytoplasm. This subunit binds the extracellular potassium ions and delivers the ions to the membrane domain of KdpB through an intramembrane tunnel. This is Potassium-transporting ATPase potassium-binding subunit from Mycolicibacterium smegmatis (strain ATCC 700084 / mc(2)155) (Mycobacterium smegmatis).